The sequence spans 75 residues: Probable pilin MJ0431 (75 aa).

A propeptide spanning residues 1–15 (MGKMKILKKLLSKKG) is cleaved from the precursor. Residues 16 to 24 (QLSMEVGVL) carry the QXSXEXXXL motif.

Post-translationally, the N-terminus is cleaved by the prepilin peptidase EppA, which recognizes the class III signal sequence.

It is found in the secreted. The protein localises to the cell surface. Its subcellular location is the fimbrium. This is Probable pilin MJ0431 from Methanocaldococcus jannaschii (strain ATCC 43067 / DSM 2661 / JAL-1 / JCM 10045 / NBRC 100440) (Methanococcus jannaschii).